The following is a 605-amino-acid chain: Elongation factor 4 (605 aa).

In terms of domain architecture, tr-type G spans 4–186 (SATRNFCIIA…AIVARVPAPK (183 aa)). Residues 16–21 (DHGKST) and 133–136 (NKID) each bind GTP.

This sequence belongs to the TRAFAC class translation factor GTPase superfamily. Classic translation factor GTPase family. LepA subfamily.

It localises to the cell membrane. It carries out the reaction GTP + H2O = GDP + phosphate + H(+). In terms of biological role, required for accurate and efficient protein synthesis under certain stress conditions. May act as a fidelity factor of the translation reaction, by catalyzing a one-codon backward translocation of tRNAs on improperly translocated ribosomes. Back-translocation proceeds from a post-translocation (POST) complex to a pre-translocation (PRE) complex, thus giving elongation factor G a second chance to translocate the tRNAs correctly. Binds to ribosomes in a GTP-dependent manner. In Dehalococcoides mccartyi (strain ATCC BAA-2266 / KCTC 15142 / 195) (Dehalococcoides ethenogenes (strain 195)), this protein is Elongation factor 4.